Consider the following 427-residue polypeptide: GTPase ERA-like, chloroplastic (427 aa).

The N-terminal 39 residues, 1-39, are a transit peptide targeting the chloroplast; sequence MAVSPHISPTLSRYKFFSTSVVENPNFSPYRIYSRRRVT. Positions 128-298 constitute an Era-type G domain; the sequence is RSGYVAVVGM…KEWILSKLPF (171 aa). Residues 136 to 143 are G1; that stretch reads GMPNVGKS. Residue 136 to 143 coordinates GTP; it reads GMPNVGKS. The interval 162-166 is G2; sequence QTTRH. The G3 stretch occupies residues 183-186; the sequence is DTPG. Residues 183-187 and 248-251 contribute to the GTP site; these read DTPGV and NKKD. The segment at 248–251 is G4; it reads NKKD. Positions 277–279 are G5; the sequence is VSA. In terms of domain architecture, KH type-2 spans 329–406; the sequence is YRNEVPYACQ…FLEVEVKVKE (78 aa).

Belongs to the TRAFAC class TrmE-Era-EngA-EngB-Septin-like GTPase superfamily. Era GTPase family.

It localises to the plastid. It is found in the chloroplast stroma. Its subcellular location is the chloroplast nucleoid. In terms of biological role, nuclear genome-encoded probable GTPase involved in ribosome biogenesis in chloroplasts. Plays a role in 16S rRNA maturation in plastids and may contribute to the assembly of the small (30S) ribosomal subunit. This Arabidopsis thaliana (Mouse-ear cress) protein is GTPase ERA-like, chloroplastic.